Consider the following 883-residue polypeptide: Phosphoenolpyruvate carboxylase (883 aa).

Active-site residues include His138 and Lys546.

This sequence belongs to the PEPCase type 1 family. The cofactor is Mg(2+).

The enzyme catalyses oxaloacetate + phosphate = phosphoenolpyruvate + hydrogencarbonate. Forms oxaloacetate, a four-carbon dicarboxylic acid source for the tricarboxylic acid cycle. The sequence is that of Phosphoenolpyruvate carboxylase from Salmonella dublin (strain CT_02021853).